The chain runs to 263 residues: Endonuclease 8 (263 aa).

Pro2 functions as the Schiff-base intermediate with DNA in the catalytic mechanism. The Proton donor role is filled by Glu3. The active-site Proton donor; for beta-elimination activity is Lys53. DNA contacts are provided by Gln70, Arg125, and Asn169. An FPG-type zinc finger spans residues Lys229–His263. The active-site Proton donor; for delta-elimination activity is Arg253.

The protein belongs to the FPG family. Zn(2+) serves as cofactor.

The enzyme catalyses 2'-deoxyribonucleotide-(2'-deoxyribose 5'-phosphate)-2'-deoxyribonucleotide-DNA = a 3'-end 2'-deoxyribonucleotide-(2,3-dehydro-2,3-deoxyribose 5'-phosphate)-DNA + a 5'-end 5'-phospho-2'-deoxyribonucleoside-DNA + H(+). In terms of biological role, involved in base excision repair of DNA damaged by oxidation or by mutagenic agents. Acts as a DNA glycosylase that recognizes and removes damaged bases. Has a preference for oxidized pyrimidines, such as thymine glycol, 5,6-dihydrouracil and 5,6-dihydrothymine. Has AP (apurinic/apyrimidinic) lyase activity and introduces nicks in the DNA strand. Cleaves the DNA backbone by beta-delta elimination to generate a single-strand break at the site of the removed base with both 3'- and 5'-phosphates. This chain is Endonuclease 8, found in Shigella flexneri serotype 5b (strain 8401).